We begin with the raw amino-acid sequence, 439 residues long: Proline--tRNA ligase (439 aa).

The protein belongs to the class-II aminoacyl-tRNA synthetase family. ProS type 2 subfamily. As to quaternary structure, homodimer.

Its subcellular location is the cytoplasm. The catalysed reaction is tRNA(Pro) + L-proline + ATP = L-prolyl-tRNA(Pro) + AMP + diphosphate. Functionally, catalyzes the attachment of proline to tRNA(Pro) in a two-step reaction: proline is first activated by ATP to form Pro-AMP and then transferred to the acceptor end of tRNA(Pro). The polypeptide is Proline--tRNA ligase (Bradyrhizobium diazoefficiens (strain JCM 10833 / BCRC 13528 / IAM 13628 / NBRC 14792 / USDA 110)).